We begin with the raw amino-acid sequence, 74 residues long: CLAVATA3/ESR (CLE)-related protein 1 (74 aa).

A signal peptide spans 1–22 (MANLKFLLCLFLICVSLSRSSA). Asn59 carries N-linked (GlcNAc...) asparagine glycosylation. 2 positions are modified to hydroxyproline: Pro66 and Pro69. Pro69 is a glycosylation site (O-linked (Ara...) hydroxyproline).

It belongs to the CLV3/ESR signal peptide family. In terms of processing, the O-glycosylation (arabinosylation) of the hydroxyproline Pro-69 enhances binding affinity of the CLE1p peptide for its receptor. As to expression, mostly expressed in roots and seedlings, and, to a lower extent, in stems and apex.

It localises to the secreted. The protein localises to the extracellular space. In terms of biological role, extracellular signal peptide that regulates cell fate. In Arabidopsis thaliana (Mouse-ear cress), this protein is CLAVATA3/ESR (CLE)-related protein 1.